The chain runs to 85 residues: uncharacterized protein (85 aa).

This is an uncharacterized protein from Escherichia coli (Bacteriophage T4).